Here is a 738-residue protein sequence, read N- to C-terminus: Alcohol dehydrogenase (quinone), dehydrogenase subunit (738 aa).

The first 35 residues, 1–35, serve as a signal peptide directing secretion; the sequence is MISAVFGKRRSLSRTLTAGTICAALISGYATMASA. E97 is a pyrroloquinoline quinone binding site. C143 and C144 are disulfide-bonded. Residue R149 coordinates pyrroloquinoline quinone. Position 217 (E217) interacts with Ca(2+). Position 278 (T278) interacts with pyrroloquinoline quinone. 2 residues coordinate Ca(2+): N298 and D343. D343 functions as the Proton acceptor in the catalytic mechanism. Pyrroloquinoline quinone-binding residues include K370 and I584. Residues 634-738 enclose the Cytochrome c domain; it reads FDSKRTDNGY…NADGIPEQLP (105 aa). Positions 650, 653, 654, and 693 each coordinate heme c.

It belongs to the bacterial PQQ dehydrogenase family. In terms of assembly, the alcohol dehydrogenase multicomponent enzyme system is composed of a dehydrogenase subunit I (AdhA) and a cytochrome c subunit II (AdhB). Pyrroloquinoline quinone serves as cofactor. Ca(2+) is required as a cofactor. It depends on heme c as a cofactor.

The protein resides in the cell membrane. It catalyses the reaction ethanol + a ubiquinone = a ubiquinol + acetaldehyde. Its function is as follows. Dehydrogenase component of the alcohol dehydrogenase multicomponent enzyme system which is involved in the production of acetic acid and in the ethanol oxidase respiratory chain. Quinohemoprotein alcohol dehydrogenase (ADH) catalyzes the oxidation of ethanol to acetaldehyde by transferring electrons to the ubiquinone embedded in the membrane phospholipids. The electrons transfer from ethanol to membranous ubiquinone occurs from pyrroloquinoline quinone (PQQ) to one heme c in subunit I (AdhA), and finally to two heme c in subunit II (AdhB). Besides ubiquinone reduction, ADH also has a ubiquinol (QH2) oxidation reaction which mediates electron transfer from ubiquinol to the non-energy generating bypass oxidase system. The electrons transfer occurs from ubiquinol (QH2) to the additional heme c within subunit II (AdhB). This is Alcohol dehydrogenase (quinone), dehydrogenase subunit (adhA) from Gluconacetobacter polyoxogenes (Acetobacter polyoxogenes).